Here is a 73-residue protein sequence, read N- to C-terminus: Mu-scoloptoxin(15)-Ssd1a (73 aa).

The N-terminal stretch at 1-20 is a signal peptide; that stretch reads MKFHIIFCLLAALMMTSAFA.

Contains 2 disulfide bonds. As to expression, expressed by the venom gland.

It is found in the secreted. Its function is as follows. Voltage-gated sodium channel inhibitor. The chain is Mu-scoloptoxin(15)-Ssd1a from Scolopendra dehaani (Thai centipede).